Reading from the N-terminus, the 254-residue chain is Triosephosphate isomerase (254 aa).

9–11 (NWK) serves as a coordination point for substrate. Catalysis depends on His96, which acts as the Electrophile. Catalysis depends on Glu169, which acts as the Proton acceptor. Residues Gly175, Ser215, and 236–237 (GG) each bind substrate.

This sequence belongs to the triosephosphate isomerase family. Homodimer.

It localises to the cytoplasm. The enzyme catalyses D-glyceraldehyde 3-phosphate = dihydroxyacetone phosphate. It functions in the pathway carbohydrate biosynthesis; gluconeogenesis. It participates in carbohydrate degradation; glycolysis; D-glyceraldehyde 3-phosphate from glycerone phosphate: step 1/1. Involved in the gluconeogenesis. Catalyzes stereospecifically the conversion of dihydroxyacetone phosphate (DHAP) to D-glyceraldehyde-3-phosphate (G3P). This is Triosephosphate isomerase from Borrelia duttonii (strain Ly).